Here is a 294-residue protein sequence, read N- to C-terminus: Factor associated with metabolism and energy (294 aa).

Positions 1–12 are enriched in basic residues; the sequence is MGLGHSKAHPRV. 2 disordered regions span residues 1–28 and 255–279; these read MGLGHSKAHPRVIKVTPLQSQETETPST and FWDSSSSDSDELEKDERRPQALVRT. Gly2 carries N-myristoyl glycine lipidation. Residues 17–28 show a composition bias toward polar residues; that stretch reads PLQSQETETPST. A compositionally biased stretch (basic and acidic residues) spans 268–279; sequence KDERRPQALVRT.

Expressed in proximal tubules of the kidney.

The protein resides in the cell membrane. It is found in the cytoplasmic vesicle. Functionally, may be involved in tuning the metabolism, energy expenditure, and excretion processes. In Mus musculus (Mouse), this protein is Factor associated with metabolism and energy.